Reading from the N-terminus, the 60-residue chain is Metallothionein B (60 aa).

Positions Met-1 to Cys-28 are beta. A divalent metal cation contacts are provided by Cys-4, Cys-6, Cys-12, Cys-14, Cys-18, Cys-20, Cys-23, Cys-25, Cys-28, Cys-32, Cys-33, Cys-35, Cys-36, Cys-40, Cys-43, Cys-47, Cys-49, Cys-54, Cys-58, and Cys-59. The alpha stretch occupies residues Lys-29 to Gln-60.

The protein belongs to the metallothionein superfamily. Type 1 family.

Metallothioneins have a high content of cysteine residues that bind various heavy metals. This is Metallothionein B (mtb) from Dicentrarchus labrax (European seabass).